Here is a 217-residue protein sequence, read N- to C-terminus: Small ribosomal subunit protein eS6 (217 aa).

This sequence belongs to the eukaryotic ribosomal protein eS6 family.

The sequence is that of Small ribosomal subunit protein eS6 from Hyperthermus butylicus (strain DSM 5456 / JCM 9403 / PLM1-5).